A 373-amino-acid polypeptide reads, in one-letter code: Dual-specificity RNA methyltransferase RlmN (373 aa).

The Proton acceptor role is filled by Glu94. In terms of domain architecture, Radical SAM core spans 100 to 339 (EDDRATLCVS…VIVRKTRGDD (240 aa)). Cys107 and Cys344 form a disulfide bridge. 3 residues coordinate [4Fe-4S] cluster: Cys114, Cys118, and Cys121. S-adenosyl-L-methionine-binding positions include 168-169 (GE), Ser200, 222-224 (SIH), and Asn301. Catalysis depends on Cys344, which acts as the S-methylcysteine intermediate.

This sequence belongs to the radical SAM superfamily. RlmN family. [4Fe-4S] cluster is required as a cofactor.

It is found in the cytoplasm. It catalyses the reaction adenosine(2503) in 23S rRNA + 2 reduced [2Fe-2S]-[ferredoxin] + 2 S-adenosyl-L-methionine = 2-methyladenosine(2503) in 23S rRNA + 5'-deoxyadenosine + L-methionine + 2 oxidized [2Fe-2S]-[ferredoxin] + S-adenosyl-L-homocysteine. It carries out the reaction adenosine(37) in tRNA + 2 reduced [2Fe-2S]-[ferredoxin] + 2 S-adenosyl-L-methionine = 2-methyladenosine(37) in tRNA + 5'-deoxyadenosine + L-methionine + 2 oxidized [2Fe-2S]-[ferredoxin] + S-adenosyl-L-homocysteine. Its function is as follows. Specifically methylates position 2 of adenine 2503 in 23S rRNA and position 2 of adenine 37 in tRNAs. m2A2503 modification seems to play a crucial role in the proofreading step occurring at the peptidyl transferase center and thus would serve to optimize ribosomal fidelity. In Shewanella baltica (strain OS185), this protein is Dual-specificity RNA methyltransferase RlmN.